The sequence spans 529 residues: MTDLSPVRRALLSVSDKTGLIELGQALAARGVELLSTGGTAKALRDAGLTVRDVAEVTGFPEMMDGRVKTLHPMVHGGLLALRDNADHVAAMEQHGIAGIDLLVVNLYPFEATVAKGADYDDCIENIDIGGPAMIRAASKNHAFVNVVVDVADYDALLAEMAANDGQTSYAFRQRLAQTAYARTAAYDAAVSNWMADQLALEAPRRRAFAGELKQTLRYGENSHQQAAFYTDGSNRPGVATARQLQGKELSYNNINDTDAAFELVAEFAPENGPACAIIKHANPCGVALGATLSEAYQKAFDCDRTSAFGGIVALNQPLDAETAGKIVEIFTEVVIAPGASDEAIAIFATKKNLRLLLTDGLPDPRQPIVAMKQVAGGLLVQDKDVGHVDLTDLKVVTRKAPTEAQMADLLFAWKVGKHVKSNAIVYVKDGATVGVGAGQMSRLDSANVAAAKAQRMATELGLPESPAKGCAVASDAFFPFADGLLEAAAAGGACVIQPGGSMRDDEVIKAADEAGLAMVFTGMRHFRH.

An MGS-like domain is found at 2–149; it reads TDLSPVRRAL…KNHAFVNVVV (148 aa).

It belongs to the PurH family.

It carries out the reaction (6R)-10-formyltetrahydrofolate + 5-amino-1-(5-phospho-beta-D-ribosyl)imidazole-4-carboxamide = 5-formamido-1-(5-phospho-D-ribosyl)imidazole-4-carboxamide + (6S)-5,6,7,8-tetrahydrofolate. The catalysed reaction is IMP + H2O = 5-formamido-1-(5-phospho-D-ribosyl)imidazole-4-carboxamide. It participates in purine metabolism; IMP biosynthesis via de novo pathway; 5-formamido-1-(5-phospho-D-ribosyl)imidazole-4-carboxamide from 5-amino-1-(5-phospho-D-ribosyl)imidazole-4-carboxamide (10-formyl THF route): step 1/1. The protein operates within purine metabolism; IMP biosynthesis via de novo pathway; IMP from 5-formamido-1-(5-phospho-D-ribosyl)imidazole-4-carboxamide: step 1/1. The sequence is that of Bifunctional purine biosynthesis protein PurH from Ruegeria pomeroyi (strain ATCC 700808 / DSM 15171 / DSS-3) (Silicibacter pomeroyi).